A 174-amino-acid chain; its full sequence is ATP-dependent protease subunit HslV (174 aa).

Residue Thr-2 is part of the active site. Residues Gly-157, Cys-160, and Thr-163 each coordinate Na(+).

It belongs to the peptidase T1B family. HslV subfamily. As to quaternary structure, a double ring-shaped homohexamer of HslV is capped on each side by a ring-shaped HslU homohexamer. The assembly of the HslU/HslV complex is dependent on binding of ATP.

It localises to the cytoplasm. The enzyme catalyses ATP-dependent cleavage of peptide bonds with broad specificity.. Allosterically activated by HslU binding. Protease subunit of a proteasome-like degradation complex believed to be a general protein degrading machinery. The polypeptide is ATP-dependent protease subunit HslV (Shewanella loihica (strain ATCC BAA-1088 / PV-4)).